Consider the following 638-residue polypeptide: MSQTGMTIDNVLDSIQHPTDVAKLDADQLRQLADELRERIIGTVSQNGGHLAPSLGVVELTLALLSVFNPDKDKFVWDVGHQAYAWKLLTGRRDEFSTLRQYQGISGFPKMAESPYDHFGVGHSSTSISAAAGMAMARDLAGDDNDVIAIIGDGSMTAGLAFEGLNQAGHQGRRLLVILNDNEMSISKNVGALSLFLSRNLSSRWVRRMKRDVETWLKSVPGIGEEMLNYAKRSEHSLKSFFTPGMLFEAFRFNYVGPVDGHDVRNLAKVMQMARALDEPVLLHVLTKKGKGYEPAESNPTYFHGVGRFELETGAACKFVDSDSLPSYTEVFGSTLCSLAEKDERVIAITAAMPEGTGVGEFSRRFPDRFVDVGICEQHAVTFAAGLAAQGFRPVVAIYSTFLQRSYDQIVHDVCLQKLPVTFCLDRGGLVGEDGPTHHGAFDLSYLRHIPNLTIIAPKDEAELQQAMKTALAGEGPVAIRYPRGIGVGACLSADPGVLEHGRGELLKKGADVAVIAVGSRVHPALAVAEEIERSTGKAVSVFNARFVKPLDAEQLVALARSHDSLLLLEENTTTGGFSSGVLELLADHDCLAGVHVRRLGLPDDFVTHGTQKQLRKLTGIDRAAIRRTLLEMLGLQE.

Thiamine diphosphate is bound by residues His-81 and 122-124 (GHS). Mg(2+) is bound at residue Asp-153. Thiamine diphosphate contacts are provided by residues 154 to 155 (GS), Asn-182, Tyr-293, and Glu-377. Asn-182 contacts Mg(2+).

This sequence belongs to the transketolase family. DXPS subfamily. As to quaternary structure, homodimer. Mg(2+) serves as cofactor. The cofactor is thiamine diphosphate.

The catalysed reaction is D-glyceraldehyde 3-phosphate + pyruvate + H(+) = 1-deoxy-D-xylulose 5-phosphate + CO2. It participates in metabolic intermediate biosynthesis; 1-deoxy-D-xylulose 5-phosphate biosynthesis; 1-deoxy-D-xylulose 5-phosphate from D-glyceraldehyde 3-phosphate and pyruvate: step 1/1. Its function is as follows. Catalyzes the acyloin condensation reaction between C atoms 2 and 3 of pyruvate and glyceraldehyde 3-phosphate to yield 1-deoxy-D-xylulose-5-phosphate (DXP). The chain is 1-deoxy-D-xylulose-5-phosphate synthase from Oleidesulfovibrio alaskensis (strain ATCC BAA-1058 / DSM 17464 / G20) (Desulfovibrio alaskensis).